We begin with the raw amino-acid sequence, 111 residues long: Large ribosomal subunit protein uL22 (111 aa).

This sequence belongs to the universal ribosomal protein uL22 family. As to quaternary structure, part of the 50S ribosomal subunit.

Functionally, this protein binds specifically to 23S rRNA; its binding is stimulated by other ribosomal proteins, e.g. L4, L17, and L20. It is important during the early stages of 50S assembly. It makes multiple contacts with different domains of the 23S rRNA in the assembled 50S subunit and ribosome. The globular domain of the protein is located near the polypeptide exit tunnel on the outside of the subunit, while an extended beta-hairpin is found that lines the wall of the exit tunnel in the center of the 70S ribosome. This chain is Large ribosomal subunit protein uL22, found in Clostridium perfringens (strain ATCC 13124 / DSM 756 / JCM 1290 / NCIMB 6125 / NCTC 8237 / Type A).